A 316-amino-acid chain; its full sequence is MAAGVPCALVTSCSATFTGDRLVQHILGTEDAVVEATSSDAVRFYPWTIDNKYYSAEINLCVVPSKFLVTAEIAESVQAFVVYFDSTQKSGLDSVSSWLPLAEAWLAEVMILVCDRVCDDGINRQQAQEWCIKHGFELVELNPEELPEEDDDFPESTGVKRIVQALNANVWSNVVMKSDRSQGFSLLNSLAGANRRVASAESCHSEQQEPSPTAERTESLPGHHSGACGSAGAQVDSIVDPMLDLDIQELASLTTGGGDLENFERLFSKLKEMKDKAATLPHEQRKLHAEKVAKAFWMAIGGDRDEIEGLSSDDEH.

Residues 198–232 form a disordered region; that stretch reads ASAESCHSEQQEPSPTAERTESLPGHHSGACGSAG. Positions 222–232 are enriched in low complexity; that stretch reads GHHSGACGSAG. Phosphoserine occurs at positions 311 and 312.

As to quaternary structure, associated with AP-1 and AP-2 complexes.

The protein localises to the cytoplasm. It is found in the cytosol. May be involved in endocytic recycling of growth factor receptors such as EGFR. This chain is Alpha- and gamma-adaptin-binding protein p34 (Aagab), found in Mus musculus (Mouse).